Consider the following 74-residue polypeptide: Brevinin-2Ta (74 aa).

Positions 1 to 22 (MFTMKKSLLLFFFLGTISLSLC) are cleaved as a signal peptide. Positions 23–41 (QEERNADEDDGEMTEEEKR) are excised as a propeptide. A disulfide bridge connects residues Cys-68 and Cys-74.

The protein belongs to the frog skin active peptide (FSAP) family. Brevinin subfamily. As to expression, expressed by the skin glands.

Its subcellular location is the secreted. Functionally, antimicrobial peptide. This Rana temporaria (European common frog) protein is Brevinin-2Ta.